The following is a 393-amino-acid chain: E3 ubiquitin-protein transferase RMND5B (393 aa).

The residue at position 1 (methionine 1) is an N-acetylmethionine. The region spanning 116–148 (QQQILQMAIVEHLYQQGMLSVAEELCQESTLNV) is the LisH domain. The region spanning 155–212 (PFLELNRILEALHEQDLGPALEWAVSHRQRLLELNSSLEFKLHRLHFIRLLAGGPAKQ) is the CTLH domain. The segment at 338 to 379 (CPILRQQTSDSNPPIKLICGHVISRDALNKLINGGKLKCPYC) adopts an RING-Gid-type zinc-finger fold.

In terms of assembly, identified in the CTLH complex that contains GID4, RANBP9 and/or RANBP10, MKLN1, MAEA, RMND5A (or alternatively its paralog RMND5B), GID8, ARMC8, WDR26 and YPEL5. Within this complex, MAEA, RMND5A (or alternatively its paralog RMND5B), GID8, WDR26, and RANBP9 and/or RANBP10 form the catalytic core, while GID4, MKLN1, ARMC8 and YPEL5 have ancillary roles.

It localises to the cytoplasm. The protein resides in the cytosol. It carries out the reaction S-ubiquitinyl-[E2 ubiquitin-conjugating enzyme]-L-cysteine + [acceptor protein]-L-lysine = [E2 ubiquitin-conjugating enzyme]-L-cysteine + N(6)-ubiquitinyl-[acceptor protein]-L-lysine.. Its function is as follows. Core component of the CTLH E3 ubiquitin-protein ligase complex that selectively accepts ubiquitin from UBE2H and mediates ubiquitination and subsequent proteasomal degradation of the transcription factor HBP1. MAEA and RMND5A are both required for catalytic activity of the CTLH E3 ubiquitin-protein ligase complex. Catalytic activity of the complex is required for normal cell proliferation. The CTLH E3 ubiquitin-protein ligase complex is not required for the degradation of enzymes involved in gluconeogenesis, such as FBP1. The protein is E3 ubiquitin-protein transferase RMND5B (RMND5B) of Homo sapiens (Human).